The following is a 379-amino-acid chain: Methionine aminopeptidase 1 (379 aa).

A C6H2-type zinc finger spans residues 7 to 60; sequence KHICCGIDCNNEADRLQCPKCLNDGVKSYFCGQECFRNSWNIHKHLHRPPNVEK. Zn(2+) contacts are provided by C10, C15, C24, C27, C37, C41, H49, and H53. Residue H192 participates in a protein binding. D209, D220, and H289 together coordinate Zn(2+). Position 296 (H296) interacts with a protein. Zn(2+)-binding residues include E322 and E353. S373 bears the Phosphoserine mark.

This sequence belongs to the peptidase M24A family. Methionine aminopeptidase type 1 subfamily. As to quaternary structure, associates with the 60S ribosomal subunit of the 80S translational complex. Zn(2+) serves as cofactor. It depends on Co(2+) as a cofactor. Mn(2+) is required as a cofactor. The cofactor is Fe(2+).

It localises to the cytoplasm. Its subcellular location is the nucleus. It is found in the nucleolus. It catalyses the reaction Release of N-terminal amino acids, preferentially methionine, from peptides and arylamides.. In terms of biological role, cotranslationally removes the N-terminal methionine from nascent proteins. The N-terminal methionine is often cleaved when the second residue in the primary sequence is small and uncharged (Met-Ala-, Cys, Gly, Pro, Ser, Thr, or Val). In Schizosaccharomyces pombe (strain 972 / ATCC 24843) (Fission yeast), this protein is Methionine aminopeptidase 1 (fma1).